We begin with the raw amino-acid sequence, 325 residues long: Elongation factor Ts, mitochondrial (325 aa).

Residues 1 to 45 (MSLLRSLRVFLVARTGSYPAGSLLRQSPQPRHTFYAGPRLSASAS) constitute a mitochondrion transit peptide. K76, K133, and K192 each carry N6-succinyllysine. S270 carries the phosphoserine modification. T324 bears the Phosphothreonine mark.

Belongs to the EF-Ts family. In terms of tissue distribution, expressed in all tissues, with the highest levels of expression in skeletal muscle, liver and kidney.

It is found in the mitochondrion. In terms of biological role, associates with the EF-Tu.GDP complex and induces the exchange of GDP to GTP. It remains bound to the aminoacyl-tRNA.EF-Tu.GTP complex up to the GTP hydrolysis stage on the ribosome. This chain is Elongation factor Ts, mitochondrial, found in Homo sapiens (Human).